The sequence spans 146 residues: MDKVKLFQTIGRVEYWERVPRLHAYGVFALPFPMDPDVNWAQWFTGPHPRAFLVSIHKYGPKAGHVYPTNLTDEDALLNVIGMVLDGHDYENDPNVTVTLKAAVPIEYVQQDPQAPALQPHQAVLDAAEVLKLKVIKGHYFFDYTR.

As to quaternary structure, homotrimer. Interacts with the major capsid protein.

Its subcellular location is the virion. Cooperatively binds the expanded capsid, thereby stabilizing the mature capsid shell and allowing the large viral DNA to be packaged. Trimers of capsid decoration proteins molecules are located at local and icosahedral threefold axes and stabilize the expanded capsid, which shows increased spacing between capsomers. The protein is Decoration protein of Thermus thermophilus (Thermus thermophilus phage P23-45).